Consider the following 110-residue polypeptide: NADH-quinone oxidoreductase subunit K (110 aa).

The next 3 helical transmembrane spans lie at 13-33 (VTHG…GIII), 38-58 (ILIL…NFLI), and 70-90 (VFVF…LAIV).

This sequence belongs to the complex I subunit 4L family. NDH-1 is composed of 14 different subunits. Subunits NuoA, H, J, K, L, M, N constitute the membrane sector of the complex.

It localises to the cell inner membrane. It catalyses the reaction a quinone + NADH + 5 H(+)(in) = a quinol + NAD(+) + 4 H(+)(out). In terms of biological role, NDH-1 shuttles electrons from NADH, via FMN and iron-sulfur (Fe-S) centers, to quinones in the respiratory chain. The immediate electron acceptor for the enzyme in this species is believed to be ubiquinone. Couples the redox reaction to proton translocation (for every two electrons transferred, four hydrogen ions are translocated across the cytoplasmic membrane), and thus conserves the redox energy in a proton gradient. The protein is NADH-quinone oxidoreductase subunit K of Francisella tularensis subsp. holarctica (strain FTNF002-00 / FTA).